The sequence spans 130 residues: Small ribosomal subunit protein uS9 (130 aa).

Belongs to the universal ribosomal protein uS9 family.

The chain is Small ribosomal subunit protein uS9 from Burkholderia thailandensis (strain ATCC 700388 / DSM 13276 / CCUG 48851 / CIP 106301 / E264).